A 633-amino-acid chain; its full sequence is 1-deoxy-D-xylulose-5-phosphate synthase (633 aa).

Thiamine diphosphate-binding positions include H72 and 113–115 (GHS). Residue D144 participates in Mg(2+) binding. Residues 145–146 (GA), N173, Y284, and E367 contribute to the thiamine diphosphate site. Mg(2+) is bound at residue N173.

Belongs to the transketolase family. DXPS subfamily. Homodimer. Mg(2+) serves as cofactor. Requires thiamine diphosphate as cofactor.

The enzyme catalyses D-glyceraldehyde 3-phosphate + pyruvate + H(+) = 1-deoxy-D-xylulose 5-phosphate + CO2. Its pathway is metabolic intermediate biosynthesis; 1-deoxy-D-xylulose 5-phosphate biosynthesis; 1-deoxy-D-xylulose 5-phosphate from D-glyceraldehyde 3-phosphate and pyruvate: step 1/1. In terms of biological role, catalyzes the acyloin condensation reaction between C atoms 2 and 3 of pyruvate and glyceraldehyde 3-phosphate to yield 1-deoxy-D-xylulose-5-phosphate (DXP). This is 1-deoxy-D-xylulose-5-phosphate synthase from Bacillus velezensis (strain DSM 23117 / BGSC 10A6 / LMG 26770 / FZB42) (Bacillus amyloliquefaciens subsp. plantarum).